Here is a 638-residue protein sequence, read N- to C-terminus: LIM domain kinase 2 (638 aa).

LIM zinc-binding domains lie at 12 to 63 (CRGC…CHKD) and 72 to 124 (CHGC…CGKC). Residues 152–239 (LISMPATTEC…TLQLLIEHDP (88 aa)) enclose the PDZ domain. At T210 the chain carries Phosphothreonine. The span at 257–266 (MQSSGHTLML) shows a compositional bias: polar residues. Residues 257–304 (MQSSGHTLMLSTLDAKENQEGTLRRRSLRRSNSISKSPGPSSPKEPLL) are disordered. The span at 270-279 (DAKENQEGTL) shows a compositional bias: basic and acidic residues. A compositionally biased stretch (low complexity) spans 286–304 (RSNSISKSPGPSSPKEPLL). S293 and S298 each carry phosphoserine. Positions 331–608 (LIHGEVLGKG…DSFEALSLFL (278 aa)) constitute a Protein kinase domain. Residues 337 to 345 (LGKGFFGQA) and K360 contribute to the ATP site. Residue D451 is part of the active site. Residue T505 is modified to Phosphothreonine; by ROCK1 and CDC42BP.

It belongs to the protein kinase superfamily. TKL Ser/Thr protein kinase family. In terms of assembly, binds ROCK1 and MARF1. Interacts with NISCH. In terms of processing, phosphorylated on serine and/or threonine residues by ROCK1. In terms of tissue distribution, found in various tissues at moderate levels, except for testis, which shows very low expression.

The protein resides in the cytoplasm. Its subcellular location is the nucleus. The protein localises to the perinuclear region. It localises to the cytoskeleton. It is found in the spindle. The protein resides in the microtubule organizing center. Its subcellular location is the centrosome. The enzyme catalyses L-seryl-[protein] + ATP = O-phospho-L-seryl-[protein] + ADP + H(+). It carries out the reaction L-threonyl-[protein] + ATP = O-phospho-L-threonyl-[protein] + ADP + H(+). Serine/threonine-protein kinase that plays an essential role in the regulation of actin filament dynamics. Acts downstream of several Rho family GTPase signal transduction pathways. Involved in astral microtubule organization and mitotic spindle orientation during early stages of mitosis by mediating phosphorylation of TPPP. Displays serine/threonine-specific phosphorylation of myelin basic protein and histone (MBP) in vitro. Suppresses ciliogenesis via multiple pathways; phosphorylation of CFL1, directional trafficking of ciliary vesicles to the ciliary base, and by facilitating YAP1 nuclear localization where it acts as a transcriptional corepressor of the TEAD4 target genes AURKA and PLK1. This chain is LIM domain kinase 2 (Limk2), found in Rattus norvegicus (Rat).